The following is a 561-amino-acid chain: MVTQHSYRMHGAVYTKPIIVDLILDLTGYTSDKNLENFKLLDPSFGDGVFLEAAVHRLMDSLIRRGYRPNELIDHLGNCIRGIELRLEAYQAGRHRLQKVLEGYGFSKPEINWLINQWIIQADFLLWQEDTTEAIKFDFVVGNPPYVRQELIQDELIKKYRKRYTTIYDRADLYVPFIQHSLELLSEQGTLGIICSDRFTKNRYGKKLRKFITDNYKVRYIVDLHKTSPFENEVTAYPAIYVIKTKNYDKSVVRAVYTEVITSKVCQDAKDFLLSNQKPDQSSKEMKTYVFSEWFAGDEPWIIQSQECREILRRLENRFPLIEDDVHSCKIRIGVATGADKVYIVDPQQVDIEPEVLLPLVTTADISSGRIIWSGKHVINPFNSDGGLINLDDFPRLKTYFQQHEEIIKNRNVAKKNPSQWFRTIDRIYPEIVHQPKLLIPDMKNTNHIVKDDGAFYPHHNLYYILPGNWNIDILRAILLSSVVKFFIWSYATKMRGDTLRYQAQYLRKIRLPDPKSLTNDQKERLMDERVIQSQEYLDSIVAEIYQLSKTEIEIIKDALE.

Belongs to the N(4)/N(6)-methyltransferase family.

The enzyme catalyses a 2'-deoxyadenosine in DNA + S-adenosyl-L-methionine = an N(6)-methyl-2'-deoxyadenosine in DNA + S-adenosyl-L-homocysteine + H(+). Its function is as follows. A gamma subtype methylase, recognizes the double-stranded sequence 5'-CTCGAG-3', methylates A-5 on both strands, and protects the DNA from cleavage by the BstVI endonuclease. The protein is Type II methyltransferase M.BstVI of Geobacillus stearothermophilus (Bacillus stearothermophilus).